Here is a 528-residue protein sequence, read N- to C-terminus: ATP synthase subunit beta 2 (528 aa).

The span at 1 to 10 shows a compositional bias: polar residues; the sequence is MADPQATNGT. The interval 1-27 is disordered; that stretch reads MADPQATNGTGAACAERDASDVGDARD. Residues 15–27 are compositionally biased toward basic and acidic residues; it reads AERDASDVGDARD. 179 to 186 contacts ATP; sequence GGAGVGKT. Over residues 488-499 the composition is skewed to basic and acidic residues; that stretch reads AAAREADARREA. The segment at 488-528 is disordered; it reads AAAREADARREAAAAASGAGPGTTSDPASGSAEPQGARHGR.

Belongs to the ATPase alpha/beta chains family. F-type ATPases have 2 components, CF(1) - the catalytic core - and CF(0) - the membrane proton channel. CF(1) has five subunits: alpha(3), beta(3), gamma(1), delta(1), epsilon(1). CF(0) has three main subunits: a(1), b(2) and c(9-12). The alpha and beta chains form an alternating ring which encloses part of the gamma chain. CF(1) is attached to CF(0) by a central stalk formed by the gamma and epsilon chains, while a peripheral stalk is formed by the delta and b chains.

It localises to the cell inner membrane. The enzyme catalyses ATP + H2O + 4 H(+)(in) = ADP + phosphate + 5 H(+)(out). Functionally, produces ATP from ADP in the presence of a proton gradient across the membrane. The catalytic sites are hosted primarily by the beta subunits. The chain is ATP synthase subunit beta 2 from Burkholderia pseudomallei (strain 1106a).